The sequence spans 330 residues: Ketol-acid reductoisomerase (NADP(+)) (330 aa).

Residues 1-181 (MNVYYEQDAD…GGTKAGVIET (181 aa)) enclose the KARI N-terminal Rossmann domain. NADP(+)-binding positions include 24 to 27 (YGSQ), Arg-47, Ser-50, Ser-52, and 82 to 85 (DQNQ). His-107 is an active-site residue. Residue Gly-133 coordinates NADP(+). Positions 182–327 (SIKNETETDL…AKLRDMMSWL (146 aa)) constitute a KARI C-terminal knotted domain. Mg(2+) is bound by residues Asp-190, Glu-194, Glu-226, and Glu-230. Residue Ser-251 coordinates substrate.

Belongs to the ketol-acid reductoisomerase family. Mg(2+) is required as a cofactor.

The catalysed reaction is (2R)-2,3-dihydroxy-3-methylbutanoate + NADP(+) = (2S)-2-acetolactate + NADPH + H(+). The enzyme catalyses (2R,3R)-2,3-dihydroxy-3-methylpentanoate + NADP(+) = (S)-2-ethyl-2-hydroxy-3-oxobutanoate + NADPH + H(+). It participates in amino-acid biosynthesis; L-isoleucine biosynthesis; L-isoleucine from 2-oxobutanoate: step 2/4. Its pathway is amino-acid biosynthesis; L-valine biosynthesis; L-valine from pyruvate: step 2/4. Involved in the biosynthesis of branched-chain amino acids (BCAA). Catalyzes an alkyl-migration followed by a ketol-acid reduction of (S)-2-acetolactate (S2AL) to yield (R)-2,3-dihydroxy-isovalerate. In the isomerase reaction, S2AL is rearranged via a Mg-dependent methyl migration to produce 3-hydroxy-3-methyl-2-ketobutyrate (HMKB). In the reductase reaction, this 2-ketoacid undergoes a metal-dependent reduction by NADPH to yield (R)-2,3-dihydroxy-isovalerate. In Pelodictyon phaeoclathratiforme (strain DSM 5477 / BU-1), this protein is Ketol-acid reductoisomerase (NADP(+)).